Reading from the N-terminus, the 242-residue chain is 2-C-methyl-D-erythritol 4-phosphate cytidylyltransferase (242 aa).

This sequence belongs to the IspD/TarI cytidylyltransferase family. IspD subfamily.

The enzyme catalyses 2-C-methyl-D-erythritol 4-phosphate + CTP + H(+) = 4-CDP-2-C-methyl-D-erythritol + diphosphate. It participates in isoprenoid biosynthesis; isopentenyl diphosphate biosynthesis via DXP pathway; isopentenyl diphosphate from 1-deoxy-D-xylulose 5-phosphate: step 2/6. Catalyzes the formation of 4-diphosphocytidyl-2-C-methyl-D-erythritol from CTP and 2-C-methyl-D-erythritol 4-phosphate (MEP). This chain is 2-C-methyl-D-erythritol 4-phosphate cytidylyltransferase, found in Shewanella loihica (strain ATCC BAA-1088 / PV-4).